An 86-amino-acid polypeptide reads, in one-letter code: Small ribosomal subunit protein uS17 (86 aa).

The protein belongs to the universal ribosomal protein uS17 family. As to quaternary structure, part of the 30S ribosomal subunit.

Functionally, one of the primary rRNA binding proteins, it binds specifically to the 5'-end of 16S ribosomal RNA. The protein is Small ribosomal subunit protein uS17 of Tropheryma whipplei (strain TW08/27) (Whipple's bacillus).